Consider the following 294-residue polypeptide: Glycine--tRNA ligase alpha subunit (294 aa).

The protein belongs to the class-II aminoacyl-tRNA synthetase family. In terms of assembly, tetramer of two alpha and two beta subunits.

It is found in the cytoplasm. It carries out the reaction tRNA(Gly) + glycine + ATP = glycyl-tRNA(Gly) + AMP + diphosphate. The protein is Glycine--tRNA ligase alpha subunit of Nostoc sp. (strain PCC 7120 / SAG 25.82 / UTEX 2576).